Here is a 418-residue protein sequence, read N- to C-terminus: uncharacterized protein (418 aa).

This is an uncharacterized protein from Saccharomyces cerevisiae (strain ATCC 204508 / S288c) (Baker's yeast).